Reading from the N-terminus, the 222-residue chain is FCS-Like Zinc finger 13 (222 aa).

The segment at 149–192 adopts an FLZ-type zinc-finger fold; the sequence is EFLSSCCLCKKKLQGKDIYMYKGEMGFCSAECRSVQIMNDERQE.

Belongs to the FLZ family. In terms of assembly, interacts with KIN10 and KIN11 via its FLZ-type zinc finger domain. Interacts with KINB1, KINB2, KINB3 and SNF4 via its N-terminal part.

The protein resides in the nucleus. The protein localises to the cytoplasm. Its function is as follows. May act as an adapter to facilitate the interaction of SnRK1 complex with effector proteins, conferring tissue- and stimulus-type specific differences in the SnRK1 regulation pathway. The polypeptide is FCS-Like Zinc finger 13 (Arabidopsis thaliana (Mouse-ear cress)).